The chain runs to 517 residues: Beclin-1-like protein (517 aa).

Residues 76-106 (LPRHKPPQSQGIPPRPRGASSPQPDATQSGK) form a disordered region. The segment covering 95-105 (SSPQPDATQSG) has biased composition (polar residues). Residues 172 to 266 (CLECMRVLSD…NRFNELEDRY (95 aa)) are a coiled coil.

Belongs to the beclin family. As to quaternary structure, component of a phosphatidylinositol 3-kinase (PI3K) complex composed of ATG6, SH3P2 and FREE1. Interacts with SINAT1, SINAT2, SINAT5, SINAT6, TRAF1A and TRAF1B. Interacts with TUBB8/TUB8. Component of a complex made of VPS38/USL1 and PI3K main subunits such as VPS15, ATG6/VPS30 and VPS34. Binds directly to VPS38/USL1. Post-translationally, ubiquitinated. The interaction with SINAT1 or SINAT2, and the presence of TRAF1A/MUSE14 and TRAF1B/MUSE13, mediates its proteasome-dependent degradation. In terms of tissue distribution, highly expressed in mature pollen grains. Expressed in roots, leaves, stems, flowers and siliques.

The protein resides in the cytoplasm. Its subcellular location is the cytoskeleton. Its function is as follows. Required for normal plant development. Required for pollen germination. Required for autophagic activity. Required to limit the pathogen-associated cell death response. May be involved in vacuolar protein sorting. Binds to microtubules. May facilitate efficient recruitment of other ATG proteins to assemble scaffolds for autophagosome biogenesis. This Arabidopsis thaliana (Mouse-ear cress) protein is Beclin-1-like protein.